The following is a 312-amino-acid chain: tRNA pseudouridine synthase B (312 aa).

The active-site Nucleophile is Asp-37.

It belongs to the pseudouridine synthase TruB family. Type 1 subfamily.

It carries out the reaction uridine(55) in tRNA = pseudouridine(55) in tRNA. Functionally, responsible for synthesis of pseudouridine from uracil-55 in the psi GC loop of transfer RNAs. The chain is tRNA pseudouridine synthase B from Thermus thermophilus (strain ATCC BAA-163 / DSM 7039 / HB27).